Reading from the N-terminus, the 438-residue chain is 3-phosphoshikimate 1-carboxyvinyltransferase (438 aa).

Residues K20, S21, and R25 each contribute to the 3-phosphoshikimate site. K20 serves as a coordination point for phosphoenolpyruvate. Phosphoenolpyruvate is bound by residues G90 and R118. 3-phosphoshikimate contacts are provided by S163, S164, Q165, S191, D320, and K347. Q165 lines the phosphoenolpyruvate pocket. D320 serves as the catalytic Proton acceptor. Phosphoenolpyruvate-binding residues include R351 and R392.

Belongs to the EPSP synthase family. In terms of assembly, monomer.

The protein resides in the cytoplasm. The enzyme catalyses 3-phosphoshikimate + phosphoenolpyruvate = 5-O-(1-carboxyvinyl)-3-phosphoshikimate + phosphate. It functions in the pathway metabolic intermediate biosynthesis; chorismate biosynthesis. In terms of biological role, catalyzes the transfer of the enolpyruvyl moiety of phosphoenolpyruvate (PEP) to the 5-hydroxyl of shikimate-3-phosphate (S3P) to produce enolpyruvyl shikimate-3-phosphate and inorganic phosphate. This chain is 3-phosphoshikimate 1-carboxyvinyltransferase, found in Natronomonas pharaonis (strain ATCC 35678 / DSM 2160 / CIP 103997 / JCM 8858 / NBRC 14720 / NCIMB 2260 / Gabara) (Halobacterium pharaonis).